The chain runs to 267 residues: MSRISDRFASLKERGEKALVTFVTAGDPDLATTEKVVLELERAGADLIELGVPFSDPMADGPTIQLSSDRALASGTTLPAILELVSRLREKTQVPIVLMGYFNPIFAYGSERFAFDAAQAGVDALLVVDLPPEEAAELKGATDSCGLDLIFLLTPTSDGSRIASVARQGSGFIYYVSVTGVTGARSAVADDLAARVTEVRGALELPLVVGFGISTPEQAGEVARAADGVVVGSALVKYFEKYQGAELLEQLGGFVSALKQGVLKGSR.

Residues E49 and D60 each act as proton acceptor in the active site.

Belongs to the TrpA family. Tetramer of two alpha and two beta chains.

It catalyses the reaction (1S,2R)-1-C-(indol-3-yl)glycerol 3-phosphate + L-serine = D-glyceraldehyde 3-phosphate + L-tryptophan + H2O. It participates in amino-acid biosynthesis; L-tryptophan biosynthesis; L-tryptophan from chorismate: step 5/5. Functionally, the alpha subunit is responsible for the aldol cleavage of indoleglycerol phosphate to indole and glyceraldehyde 3-phosphate. The chain is Tryptophan synthase alpha chain from Citrifermentans bemidjiense (strain ATCC BAA-1014 / DSM 16622 / JCM 12645 / Bem) (Geobacter bemidjiensis).